A 198-amino-acid chain; its full sequence is Superoxide dismutase [Fe] (198 aa).

Fe(3+)-binding residues include His-27, His-74, Asp-157, and His-161.

The protein belongs to the iron/manganese superoxide dismutase family. In terms of assembly, homodimer. It depends on Fe(3+) as a cofactor.

The enzyme catalyses 2 superoxide + 2 H(+) = H2O2 + O2. Destroys superoxide anion radicals which are normally produced within the cells and which are toxic to biological systems. This chain is Superoxide dismutase [Fe] (sodB), found in Pseudomonas putida (Arthrobacter siderocapsulatus).